Reading from the N-terminus, the 527-residue chain is Catalase (527 aa).

Position 2 is an N-acetylalanine (alanine 2). Position 9 is a phosphoserine (serine 9). Lysine 13 is modified (N6-succinyllysine). Residues histidine 75 and asparagine 148 contribute to the active site. NADP(+) contacts are provided by histidine 194, serine 201, arginine 203, and asparagine 213. Lysine 221 is modified (N6-succinyllysine). Lysine 233 carries the N6-acetyllysine modification. NADP(+)-binding residues include lysine 237, tryptophan 303, histidine 305, and lysine 306. Lysine 306 carries the post-translational modification N6-acetyllysine; alternate. Position 306 is an N6-succinyllysine; alternate (lysine 306). Tyrosine 358 provides a ligand contact to heme. Serine 417 and serine 422 each carry phosphoserine. Position 480 is an N6-acetyllysine; alternate (lysine 480). At lysine 480 the chain carries N6-succinyllysine; alternate. Lysine 499 bears the N6-acetyllysine mark. Threonine 511 carries the post-translational modification Phosphothreonine. Serine 515 and serine 517 each carry phosphoserine. The Microbody targeting signal; atypical motif lies at 524-527 (KANL).

It belongs to the catalase family. In terms of assembly, homotetramer. Interacts (via microbody targeting signal) with PEX5, monomeric form interacts with PEX5, leading to its translocation into peroxisomes. Requires heme as cofactor. The cofactor is NADP(+).

It is found in the peroxisome matrix. The catalysed reaction is 2 H2O2 = O2 + 2 H2O. Its function is as follows. Catalyzes the degradation of hydrogen peroxide (H(2)O(2)) generated by peroxisomal oxidases to water and oxygen, thereby protecting cells from the toxic effects of hydrogen peroxide. Promotes growth of cells including T-cells, B-cells, myeloid leukemia cells, melanoma cells, mastocytoma cells and normal and transformed fibroblast cells. The protein is Catalase (CAT) of Pongo abelii (Sumatran orangutan).